The following is a 94-amino-acid chain: Co-chaperonin GroES (94 aa).

It belongs to the GroES chaperonin family. In terms of assembly, heptamer of 7 subunits arranged in a ring. Interacts with the chaperonin GroEL.

It localises to the cytoplasm. Its function is as follows. Together with the chaperonin GroEL, plays an essential role in assisting protein folding. The GroEL-GroES system forms a nano-cage that allows encapsulation of the non-native substrate proteins and provides a physical environment optimized to promote and accelerate protein folding. GroES binds to the apical surface of the GroEL ring, thereby capping the opening of the GroEL channel. This is Co-chaperonin GroES from Bacillus sp. (strain PS3).